The primary structure comprises 545 residues: Chaperonin GroEL (545 aa).

ATP is bound by residues 29-32 (TLGP), lysine 50, 86-90 (DGTTT), glycine 413, and aspartate 495.

It belongs to the chaperonin (HSP60) family. Forms a cylinder of 14 subunits composed of two heptameric rings stacked back-to-back. Interacts with the co-chaperonin GroES.

Its subcellular location is the cytoplasm. The enzyme catalyses ATP + H2O + a folded polypeptide = ADP + phosphate + an unfolded polypeptide.. In terms of biological role, together with its co-chaperonin GroES, plays an essential role in assisting protein folding. The GroEL-GroES system forms a nano-cage that allows encapsulation of the non-native substrate proteins and provides a physical environment optimized to promote and accelerate protein folding. The chain is Chaperonin GroEL from Borreliella burgdorferi (strain ATCC 35210 / DSM 4680 / CIP 102532 / B31) (Borrelia burgdorferi).